Consider the following 430-residue polypeptide: Adenylosuccinate synthetase (430 aa).

GTP is bound by residues 13–19 (GDEGKGK) and 41–43 (GHT). Catalysis depends on Asp-14, which acts as the Proton acceptor. Mg(2+) is bound by residues Asp-14 and Gly-41. Residues 14 to 17 (DEGK), 39 to 42 (NAGH), Thr-130, Arg-144, Gln-225, Thr-240, and Arg-304 each bind IMP. His-42 (proton donor) is an active-site residue. A substrate-binding site is contributed by 300 to 306 (ASTGRPR). Residues Arg-306, 332–334 (KLD), and 414–416 (STG) contribute to the GTP site.

It belongs to the adenylosuccinate synthetase family. As to quaternary structure, homodimer. Mg(2+) serves as cofactor.

The protein localises to the cytoplasm. The enzyme catalyses IMP + L-aspartate + GTP = N(6)-(1,2-dicarboxyethyl)-AMP + GDP + phosphate + 2 H(+). It functions in the pathway purine metabolism; AMP biosynthesis via de novo pathway; AMP from IMP: step 1/2. In terms of biological role, plays an important role in the de novo pathway of purine nucleotide biosynthesis. Catalyzes the first committed step in the biosynthesis of AMP from IMP. The sequence is that of Adenylosuccinate synthetase from Xylella fastidiosa (strain M12).